We begin with the raw amino-acid sequence, 246 residues long: 14-3-3 protein beta/alpha (246 aa).

Met1 is modified (N-acetylmethionine). N-acetylthreonine; in 14-3-3 protein beta/alpha, N-terminally processed is present on Thr2. The residue at position 2 (Thr2) is a Phosphothreonine. Lys5 is subject to N6-acetyllysine. Lys51 carries the post-translational modification N6-acetyllysine; alternate. Lys51 is covalently cross-linked (Glycyl lysine isopeptide (Lys-Gly) (interchain with G-Cter in SUMO2); alternate). Phosphoserine is present on Ser60. N6-acetyllysine is present on Lys70. A 3'-nitrotyrosine mark is found at Tyr84 and Tyr106. Lys117 bears the N6-acetyllysine mark. Phosphoserine occurs at positions 186 and 232.

This sequence belongs to the 14-3-3 family. Homodimer. Interacts with SAMSN1 and PRKCE. Interacts with AKAP13. Interacts with SSH1 and TORC2/CRTC2. Interacts with ABL1; the interaction results in cytoplasmic location of ABL1 and inhibition of cABL-mediated apoptosis. Interacts with ROR2 (dimer); the interaction results in phosphorylation of YWHAB on tyrosine residues. Interacts with GAB2. Interacts with YAP1 (phosphorylated form). Interacts with the phosphorylated (by AKT1) form of SRPK2. Interacts with PKA-phosphorylated AANAT. Interacts with MYO1C. Interacts with SIRT2. Interacts with the 'Thr-369' phosphorylated form of DAPK2. Interacts with PI4KB, TBC1D22A and TBC1D22B. Interacts with the 'Ser-1134' and 'Ser-1161' phosphorylated form of SOS1. Interacts (via phosphorylated form) with YWHAB; this interaction occurs in a protein kinase AKT1-dependent manner. Interacts with SLITRK1. Interacts with SYNPO2 (phosphorylated form); YWHAB competes with ACTN2 for interaction with SYNPO2. Interacts with RIPOR2 (via phosphorylated form); this interaction occurs in a chemokine-dependent manner and does not compete for binding of RIPOR2 with RHOA nor blocks inhibition of RIPOR2-mediated RHOA activity. Interacts with MARK2 and MARK3. Interacts with TESK1; the interaction is dependent on the phosphorylation of TESK1 'Ser-439' and inhibits TESK1 kinase activity. Interacts with MEFV. Interacts with HDAC4. Interacts with ADAM22 (via C-terminus). In terms of processing, isoform alpha differs from isoform beta in being phosphorylated. Phosphorylated on Ser-60 by protein kinase C delta type catalytic subunit in a sphingosine-dependent fashion. Post-translationally, isoform Short contains a N-acetylmethionine at position 1.

The protein localises to the cytoplasm. It is found in the melanosome. Adapter protein implicated in the regulation of a large spectrum of both general and specialized signaling pathways. Binds to a large number of partners, usually by recognition of a phosphoserine or phosphothreonine motif. Binding generally results in the modulation of the activity of the binding partner. Negative regulator of osteogenesis. Blocks the nuclear translocation of the phosphorylated form (by AKT1) of SRPK2 and antagonizes its stimulatory effect on cyclin D1 expression resulting in blockage of neuronal apoptosis elicited by SRPK2. Negative regulator of signaling cascades that mediate activation of MAP kinases via AKAP13. This is 14-3-3 protein beta/alpha (Ywhab) from Mus musculus (Mouse).